Here is a 297-residue protein sequence, read N- to C-terminus: Aspartate dehydrogenase domain-containing protein (297 aa).

2 positions are modified to phosphoserine: serine 24 and serine 172.

The protein belongs to the L-aspartate dehydrogenase family.

In Rattus norvegicus (Rat), this protein is Aspartate dehydrogenase domain-containing protein.